The following is a 140-amino-acid chain: Methylglyoxal synthase (140 aa).

The region spanning methionine 1–leucine 140 is the MGS-like domain. Residues histidine 8, lysine 12, threonine 34–threonine 37, and serine 54–glycine 55 contribute to the substrate site. Aspartate 60 functions as the Proton donor/acceptor in the catalytic mechanism. Histidine 87 serves as a coordination point for substrate.

Belongs to the methylglyoxal synthase family.

The catalysed reaction is dihydroxyacetone phosphate = methylglyoxal + phosphate. In terms of biological role, catalyzes the formation of methylglyoxal from dihydroxyacetone phosphate. In Geobacillus sp. (strain WCH70), this protein is Methylglyoxal synthase.